Here is a 336-residue protein sequence, read N- to C-terminus: Dihydroorotate dehydrogenase (quinone) (336 aa).

Residues 62–66 and threonine 86 each bind FMN; that span reads AGLDK. Lysine 66 lines the substrate pocket. 111–115 is a binding site for substrate; sequence NRMGF. The FMN site is built by asparagine 139 and asparagine 172. Position 172 (asparagine 172) interacts with substrate. Catalysis depends on serine 175, which acts as the Nucleophile. Asparagine 177 lines the substrate pocket. 2 residues coordinate FMN: lysine 217 and threonine 245. Position 246–247 (246–247) interacts with substrate; sequence NT. Residues glycine 268, glycine 297, and 318 to 319 contribute to the FMN site; that span reads YS.

The protein belongs to the dihydroorotate dehydrogenase family. Type 2 subfamily. Monomer. FMN serves as cofactor.

The protein resides in the cell membrane. The enzyme catalyses (S)-dihydroorotate + a quinone = orotate + a quinol. Its pathway is pyrimidine metabolism; UMP biosynthesis via de novo pathway; orotate from (S)-dihydroorotate (quinone route): step 1/1. Catalyzes the conversion of dihydroorotate to orotate with quinone as electron acceptor. The chain is Dihydroorotate dehydrogenase (quinone) from Escherichia coli (strain UTI89 / UPEC).